The primary structure comprises 259 residues: UDP-2,3-diacylglucosamine hydrolase (259 aa).

Aspartate 8, histidine 10, aspartate 41, asparagine 79, and histidine 114 together coordinate Mn(2+). 79 to 80 (NR) is a substrate binding site. Residues aspartate 122, serine 160, asparagine 164, lysine 167, and histidine 195 each coordinate substrate. Positions 195 and 197 each coordinate Mn(2+).

It belongs to the LpxH family. Mn(2+) is required as a cofactor.

Its subcellular location is the cell inner membrane. The catalysed reaction is UDP-2-N,3-O-bis[(3R)-3-hydroxytetradecanoyl]-alpha-D-glucosamine + H2O = 2-N,3-O-bis[(3R)-3-hydroxytetradecanoyl]-alpha-D-glucosaminyl 1-phosphate + UMP + 2 H(+). Its pathway is glycolipid biosynthesis; lipid IV(A) biosynthesis; lipid IV(A) from (3R)-3-hydroxytetradecanoyl-[acyl-carrier-protein] and UDP-N-acetyl-alpha-D-glucosamine: step 4/6. Hydrolyzes the pyrophosphate bond of UDP-2,3-diacylglucosamine to yield 2,3-diacylglucosamine 1-phosphate (lipid X) and UMP by catalyzing the attack of water at the alpha-P atom. Involved in the biosynthesis of lipid A, a phosphorylated glycolipid that anchors the lipopolysaccharide to the outer membrane of the cell. The polypeptide is UDP-2,3-diacylglucosamine hydrolase (Edwardsiella ictaluri (strain 93-146)).